The following is a 546-amino-acid chain: 2-succinyl-5-enolpyruvyl-6-hydroxy-3-cyclohexene-1-carboxylate synthase (546 aa).

The protein belongs to the TPP enzyme family. MenD subfamily. Homodimer. Requires Mg(2+) as cofactor. The cofactor is Mn(2+). It depends on thiamine diphosphate as a cofactor.

The catalysed reaction is isochorismate + 2-oxoglutarate + H(+) = 5-enolpyruvoyl-6-hydroxy-2-succinyl-cyclohex-3-ene-1-carboxylate + CO2. The protein operates within quinol/quinone metabolism; 1,4-dihydroxy-2-naphthoate biosynthesis; 1,4-dihydroxy-2-naphthoate from chorismate: step 2/7. Its pathway is quinol/quinone metabolism; menaquinone biosynthesis. Catalyzes the thiamine diphosphate-dependent decarboxylation of 2-oxoglutarate and the subsequent addition of the resulting succinic semialdehyde-thiamine pyrophosphate anion to isochorismate to yield 2-succinyl-5-enolpyruvyl-6-hydroxy-3-cyclohexene-1-carboxylate (SEPHCHC). The polypeptide is 2-succinyl-5-enolpyruvyl-6-hydroxy-3-cyclohexene-1-carboxylate synthase (Mycolicibacterium smegmatis (strain ATCC 700084 / mc(2)155) (Mycobacterium smegmatis)).